The sequence spans 323 residues: Beta-ketoacyl-[acyl-carrier-protein] synthase III (323 aa).

Active-site residues include cysteine 113 and histidine 250. The ACP-binding stretch occupies residues 251 to 255; that stretch reads QANRR. Asparagine 280 is a catalytic residue.

It belongs to the thiolase-like superfamily. FabH family. Homodimer.

It is found in the cytoplasm. It carries out the reaction malonyl-[ACP] + acetyl-CoA + H(+) = 3-oxobutanoyl-[ACP] + CO2 + CoA. The protein operates within lipid metabolism; fatty acid biosynthesis. Its function is as follows. Catalyzes the condensation reaction of fatty acid synthesis by the addition to an acyl acceptor of two carbons from malonyl-ACP. Catalyzes the first condensation reaction which initiates fatty acid synthesis and may therefore play a role in governing the total rate of fatty acid production. Possesses both acetoacetyl-ACP synthase and acetyl transacylase activities. Its substrate specificity determines the biosynthesis of branched-chain and/or straight-chain of fatty acids. The polypeptide is Beta-ketoacyl-[acyl-carrier-protein] synthase III (Allorhizobium ampelinum (strain ATCC BAA-846 / DSM 112012 / S4) (Agrobacterium vitis (strain S4))).